Here is a 21-residue protein sequence, read N- to C-terminus: Large ribosomal subunit protein uL10 (21 aa).

The protein belongs to the universal ribosomal protein uL10 family. Part of the ribosomal stalk of the 50S ribosomal subunit. The N-terminus interacts with L11 and the large rRNA to form the base of the stalk. The C-terminus forms an elongated spine to which L12 dimers bind in a sequential fashion forming a multimeric L10(L12)X complex.

Its function is as follows. Forms part of the ribosomal stalk, playing a central role in the interaction of the ribosome with GTP-bound translation factors. The chain is Large ribosomal subunit protein uL10 (rplJ) from Bacillus cereus.